Consider the following 227-residue polypeptide: Transmembrane emp24 domain-containing protein 1 (227 aa).

Residues 1–24 (MMAAGAAVALALWLLLPAVGVGEA) form the signal peptide. Residues 25-194 (GPPPIQDGEF…LQEDNLERVN (170 aa)) are Extracellular-facing. The GOLD domain occupies 43-125 (KQCFYQSAPA…EKLVFFELIF (83 aa)). Residues 145 to 170 (EMLDVKMEDIKESIETMRTRLERSIQ) adopt a coiled-coil conformation. A helical transmembrane segment spans residues 195–215 (FWSAANVAVLLLVAVLQVCTL). Residues 216–227 (KRFFHDKRPVPT) lie on the Cytoplasmic side of the membrane. The COPII vesicle coat-binding motif lies at 218 to 219 (FF). A COPI vesicle coat-binding motif is present at residues 218–227 (FFHDKRPVPT).

This sequence belongs to the EMP24/GP25L family. In terms of assembly, homodimer in endoplasmic reticulum, endoplasmic reticulum-Golgi intermediate compartment and cis-Golgi network. Interacts with IL1RL1. Interacts with RNF26; this interaction is important to modulate innate immune signaling through the cGAS-STING pathway. In terms of tissue distribution, widely expressed.

It localises to the cell membrane. The protein localises to the endoplasmic reticulum membrane. It is found in the golgi apparatus. Its subcellular location is the cis-Golgi network membrane. The protein resides in the endoplasmic reticulum-Golgi intermediate compartment membrane. In terms of biological role, potential role in vesicular protein trafficking, mainly in the early secretory pathway. May act as a cargo receptor at the lumenal side for incorporation of secretory cargo molecules into transport vesicles and may be involved in vesicle coat formation at the cytoplasmic side. Plays a positive role in IL-33-mediated IL-8 and IL-6 production by interacting with interleukin-33 receptor IL1RL1. Plays also a role in the modulation of innate immune signaling through the cGAS-STING pathway by interacting with RNF26. The sequence is that of Transmembrane emp24 domain-containing protein 1 (Tmed1) from Mus musculus (Mouse).